A 628-amino-acid polypeptide reads, in one-letter code: tRNA uridine 5-carboxymethylaminomethyl modification enzyme MnmG (628 aa).

FAD-binding positions include 11-16 (GAGHAG), valine 123, and serine 178. 271–285 (GPRYCPSIETKIVTF) is a binding site for NAD(+). Residue glutamine 368 participates in FAD binding.

It belongs to the MnmG family. In terms of assembly, homodimer. Heterotetramer of two MnmE and two MnmG subunits. The cofactor is FAD.

The protein resides in the cytoplasm. Functionally, NAD-binding protein involved in the addition of a carboxymethylaminomethyl (cmnm) group at the wobble position (U34) of certain tRNAs, forming tRNA-cmnm(5)s(2)U34. The protein is tRNA uridine 5-carboxymethylaminomethyl modification enzyme MnmG of Bacteroides thetaiotaomicron (strain ATCC 29148 / DSM 2079 / JCM 5827 / CCUG 10774 / NCTC 10582 / VPI-5482 / E50).